The following is a 322-amino-acid chain: 4-diphosphocytidyl-2-C-methyl-D-erythritol kinase (322 aa).

Lysine 25 is a catalytic residue. 110-120 (PVAGGMAGGSA) serves as a coordination point for ATP. Residue aspartate 152 is part of the active site.

This sequence belongs to the GHMP kinase family. IspE subfamily.

The enzyme catalyses 4-CDP-2-C-methyl-D-erythritol + ATP = 4-CDP-2-C-methyl-D-erythritol 2-phosphate + ADP + H(+). It functions in the pathway isoprenoid biosynthesis; isopentenyl diphosphate biosynthesis via DXP pathway; isopentenyl diphosphate from 1-deoxy-D-xylulose 5-phosphate: step 3/6. Functionally, catalyzes the phosphorylation of the position 2 hydroxy group of 4-diphosphocytidyl-2C-methyl-D-erythritol. The sequence is that of 4-diphosphocytidyl-2-C-methyl-D-erythritol kinase from Mycolicibacterium gilvum (strain PYR-GCK) (Mycobacterium gilvum (strain PYR-GCK)).